Reading from the N-terminus, the 111-residue chain is MANPKVHVRKGDLVQVITGKDAGKKGKIIEVIPAKNRVVVEKVNIVKRHSKPSKTNPQGGIIEKEAPIDASNVMIFCPKCDRPVRSGHKFLENGDKARICRKCGDVLDKDK.

The protein belongs to the universal ribosomal protein uL24 family. As to quaternary structure, part of the 50S ribosomal subunit.

In terms of biological role, one of two assembly initiator proteins, it binds directly to the 5'-end of the 23S rRNA, where it nucleates assembly of the 50S subunit. Its function is as follows. One of the proteins that surrounds the polypeptide exit tunnel on the outside of the subunit. The chain is Large ribosomal subunit protein uL24 from Heliobacterium modesticaldum (strain ATCC 51547 / Ice1).